The following is a 633-amino-acid chain: E3 ubiquitin-protein ligase ZSWIM2 (633 aa).

An SWIM-type zinc finger spans residues 54 to 87 (FRVFLGNPHVCNCSTFPKGGELCKHICWVLLKKF). Residues 147–198 (CSICQELLLEKKLPVTFCRFGCGNSIHIKCMKILANYQSTSNTSMLKCPLCR) form an RING-type 1 zinc finger. The ZZ-type zinc-finger motif lies at 229 to 280 (HLGIPCNNCKQFPIEGKCYKCTECIEYHLCQECFDSCCHLSHTFTFREKRNQ). 8 residues coordinate Zn(2+): Cys-234, Cys-237, Cys-249, Cys-252, Cys-258, Cys-261, His-267, and His-270. Residues 344-388 (CLLCLKAFHLGQHTRLLPCTHKFHRKCIDNWLFHKCNSCPIDGQV) form an RING-type 2 zinc finger.

In terms of assembly, dimer. Interacts with UBE2D1. Polyubiquitinated. Polyubiquitination is followed by degradation via the proteasome. As to expression, expression is testis-specific.

It carries out the reaction S-ubiquitinyl-[E2 ubiquitin-conjugating enzyme]-L-cysteine + [acceptor protein]-L-lysine = [E2 ubiquitin-conjugating enzyme]-L-cysteine + N(6)-ubiquitinyl-[acceptor protein]-L-lysine.. Functionally, E3 ubiquitin-protein ligase involved in the regulation of Fas-, DR3- and DR4-mediated apoptosis. Functions in conjunction with the UBE2D1, UBE2D3 and UBE2E1 E2 ubiquitin-conjugating enzymes. The sequence is that of E3 ubiquitin-protein ligase ZSWIM2 from Homo sapiens (Human).